Reading from the N-terminus, the 328-residue chain is DNA-directed RNA polymerase subunit alpha (328 aa).

Positions 1 to 231 (MIQQMQMPEK…DHVRLFSLFS (231 aa)) are alpha N-terminal domain (alpha-NTD). An alpha C-terminal domain (alpha-CTD) region spans residues 252-328 (MRKLLMTRIE…MEVTKYRLNQ (77 aa)).

This sequence belongs to the RNA polymerase alpha chain family. Homodimer. The RNAP catalytic core consists of 2 alpha, 1 beta, 1 beta' and 1 omega subunit. When a sigma factor is associated with the core the holoenzyme is formed, which can initiate transcription.

The catalysed reaction is RNA(n) + a ribonucleoside 5'-triphosphate = RNA(n+1) + diphosphate. Its function is as follows. DNA-dependent RNA polymerase catalyzes the transcription of DNA into RNA using the four ribonucleoside triphosphates as substrates. In Chloroherpeton thalassium (strain ATCC 35110 / GB-78), this protein is DNA-directed RNA polymerase subunit alpha.